The sequence spans 403 residues: Endophilin-B2 (403 aa).

The segment at 1 to 27 (MDFNVKKLASDAGVFFSRAMQFTEEKL) is membrane-binding amphipathic helix. A BAR domain is found at 24–287 (EEKLGQAEKT…LGRFSGTFVG (264 aa)). Residues 210 to 233 (WSDEVEKAEHELRLTQTEFDRQAE) are a coiled coil. An SH3 domain is found at 343–403 (SGTRKARVLY…VPVTYLELLS (61 aa)).

This sequence belongs to the endophilin family. In terms of assembly, homodimer, and heterodimer with SH3GLB1.

The protein localises to the cytoplasm. In Gallus gallus (Chicken), this protein is Endophilin-B2.